A 199-amino-acid polypeptide reads, in one-letter code: GTP cyclohydrolase-2 (199 aa).

A GTP-binding site is contributed by 52 to 56; sequence RMHSE. Positions 57, 68, and 70 each coordinate Zn(2+). GTP contacts are provided by residues Gln-73, 94 to 96, and Thr-116; that span reads EGR. The active-site Proton acceptor is Asp-128. The Nucleophile role is filled by Arg-130. The GTP site is built by Thr-151 and Lys-156.

This sequence belongs to the GTP cyclohydrolase II family. Zn(2+) is required as a cofactor.

The catalysed reaction is GTP + 4 H2O = 2,5-diamino-6-hydroxy-4-(5-phosphoribosylamino)-pyrimidine + formate + 2 phosphate + 3 H(+). The protein operates within cofactor biosynthesis; riboflavin biosynthesis; 5-amino-6-(D-ribitylamino)uracil from GTP: step 1/4. Catalyzes the conversion of GTP to 2,5-diamino-6-ribosylamino-4(3H)-pyrimidinone 5'-phosphate (DARP), formate and pyrophosphate. The protein is GTP cyclohydrolase-2 of Aliivibrio salmonicida (strain LFI1238) (Vibrio salmonicida (strain LFI1238)).